Consider the following 789-residue polypeptide: Ribosomal protein S6 kinase alpha-5 (789 aa).

The 270-residue stretch at 39 to 308 (FELLKVLGTG…ADEIKQHPFF (270 aa)) folds into the Protein kinase 1 domain. ATP is bound by residues 45–53 (LGTGAYGKV) and K71. Catalysis depends on D167, which acts as the Proton acceptor. The residue at position 202 (S202) is a Phosphoserine; by autocatalysis. In terms of domain architecture, AGC-kinase C-terminal spans 309–377 (QNINWDDLAA…VAPSILFKRN (69 aa)). Position 350 is a phosphoserine (S350). A phosphoserine; by autocatalysis mark is found at S366 and S371. One can recognise a Protein kinase 2 domain in the interval 416-677 (DLKEKPLGEG…MSSLRYNEWL (262 aa)). ATP contacts are provided by residues 422-430 (LGEGSFSIC) and K445. The Proton acceptor role is filled by D534. Phosphothreonine occurs at positions 571 and 690. The segment at 731 to 789 (AKRRKMKKTSTSTETRSSSSESSHSSSSHSHGKTTPTKTLQPTNPTDSNNPETIFQFSD) is disordered. A compositionally biased stretch (low complexity) spans 739–769 (TSTSTETRSSSSESSHSSSSHSHGKTTPTKT). Phosphoserine; by autocatalysis is present on residues S740, S742, and S748. Residues 770–789 (LQPTNPTDSNNPETIFQFSD) are compositionally biased toward polar residues.

This sequence belongs to the protein kinase superfamily. AGC Ser/Thr protein kinase family. S6 kinase subfamily. It depends on Mg(2+) as a cofactor. Ser-366 and Thr-571 phosphorylation is required for kinase activity. Ser-366 and Ser-202 are autophosphorylated by the C-terminal kinase domain, and their phosphorylation is essential for the catalytic activity of the N-terminal kinase domain. Phosphorylated at Ser-350, Thr-571 and Thr-690 by MAP kinases. Autophosphorylated at Ser-740, Ser-742 and Ser-748 by the N-terminal kinase domain. As to expression, widely expressed with high levels in heart, brain and placenta. Less abundant in lung, kidney and liver.

Its subcellular location is the nucleus. It catalyses the reaction L-seryl-[protein] + ATP = O-phospho-L-seryl-[protein] + ADP + H(+). It carries out the reaction L-threonyl-[protein] + ATP = O-phospho-L-threonyl-[protein] + ADP + H(+). With respect to regulation, activated by phosphorylation at Ser-350, Thr-571 and Thr-690 by MAP kinases, and by further autophosphorylation of Ser-202, Ser-366 and Ser-371 by the activated C-terminal kinase domain. The active N-terminal kinase domain finally phosphorylates downstream substrates, as well as Ser-740, Ser-742 and Ser-748 in its own C-terminal region. In terms of biological role, serine/threonine-protein kinase that is required for the mitogen or stress-induced phosphorylation of the transcription factors CREB1 and ATF1 and that contributes to gene activation by histone phosphorylation. Phosphorylates CREB1 and ATF1 in response to mitogenic or stress stimuli such as UV-C irradiation, epidermal growth factor (EGF) and anisomycin. Directly represses transcription via phosphorylation of 'Ser-1' of histone H2A. Phosphorylates 'Ser-10' of histone H3 in response to mitogenics, stress stimuli and EGF, which results in the transcriptional activation of several immediate early genes, including proto-oncogenes c-fos/FOS and c-jun/JUN. May also phosphorylate 'Ser-28' of histone H3. Mediates the mitogen- and stress-induced phosphorylation of high mobility group protein 1 (HMGN1/HMG14). The sequence is that of Ribosomal protein S6 kinase alpha-5 (RPS6KA5) from Gallus gallus (Chicken).